A 169-amino-acid chain; its full sequence is Fumarase E (169 aa).

The protein belongs to the MtlR/FumE family. Homodimer.

It catalyses the reaction (S)-malate = fumarate + H2O. Functionally, in vitro catalyzes the addition of water to fumarate, forming malate. Cannot catalyze the reverse reaction. Cannot use the cis-isomer maleate as substrate. This is Fumarase E from Shigella flexneri.